We begin with the raw amino-acid sequence, 134 residues long: Large ribosomal subunit protein bL17 (134 aa).

It belongs to the bacterial ribosomal protein bL17 family. Part of the 50S ribosomal subunit. Contacts protein L32.

In Anaplasma marginale (strain Florida), this protein is Large ribosomal subunit protein bL17.